Reading from the N-terminus, the 326-residue chain is Biotin synthase (326 aa).

The region spanning 40 to 264 is the Radical SAM core domain; sequence GQVQACTLVS…VLPRSYVRLA (225 aa). Residues C55, C59, and C62 each coordinate [4Fe-4S] cluster. [2Fe-2S] cluster is bound by residues C99, C130, C190, and R262.

This sequence belongs to the radical SAM superfamily. Biotin synthase family. As to quaternary structure, homodimer. It depends on [4Fe-4S] cluster as a cofactor. Requires [2Fe-2S] cluster as cofactor.

It catalyses the reaction (4R,5S)-dethiobiotin + (sulfur carrier)-SH + 2 reduced [2Fe-2S]-[ferredoxin] + 2 S-adenosyl-L-methionine = (sulfur carrier)-H + biotin + 2 5'-deoxyadenosine + 2 L-methionine + 2 oxidized [2Fe-2S]-[ferredoxin]. It participates in cofactor biosynthesis; biotin biosynthesis; biotin from 7,8-diaminononanoate: step 2/2. Its function is as follows. Catalyzes the conversion of dethiobiotin (DTB) to biotin by the insertion of a sulfur atom into dethiobiotin via a radical-based mechanism. This is Biotin synthase from Halorhodospira halophila (strain DSM 244 / SL1) (Ectothiorhodospira halophila (strain DSM 244 / SL1)).